We begin with the raw amino-acid sequence, 140 residues long: Large ribosomal subunit protein uL16 (140 aa).

The protein belongs to the universal ribosomal protein uL16 family. In terms of assembly, part of the 50S ribosomal subunit.

In terms of biological role, binds 23S rRNA and is also seen to make contacts with the A and possibly P site tRNAs. In Malacoplasma penetrans (strain HF-2) (Mycoplasma penetrans), this protein is Large ribosomal subunit protein uL16.